The primary structure comprises 127 residues: Glycine cleavage system H protein (127 aa).

One can recognise a Lipoyl-binding domain in the interval 24-106 (VVTVGVTFHA…YGAGWFFKLK (83 aa)). At lysine 65 the chain carries N6-lipoyllysine.

This sequence belongs to the GcvH family. In terms of assembly, the glycine cleavage system is composed of four proteins: P, T, L and H. (R)-lipoate is required as a cofactor.

Its function is as follows. The glycine cleavage system catalyzes the degradation of glycine. The H protein shuttles the methylamine group of glycine from the P protein to the T protein. The protein is Glycine cleavage system H protein of Laribacter hongkongensis (strain HLHK9).